A 371-amino-acid polypeptide reads, in one-letter code: 43 kDa relaxation protein (371 aa).

Disordered stretches follow at residues 1–46, 150–172, 196–221, 263–291, and 328–371; these read MASY…GNMP, KEPDAVAQKRHVSGKHRPNAKNT, RVDSRSLKAQGIDREPERHLGAGQVQ, SERDTLTLKQELKSEPEQESHSGRTFDFE, and IHQE…SFSR. Residues 22–42 are compositionally biased toward basic and acidic residues; it reads YIAREGKYAREKDSDLEHKES. Residues 157-168 show a composition bias toward basic residues; that stretch reads QKRHVSGKHRPN. Over residues 196–215 the composition is skewed to basic and acidic residues; it reads RVDSRSLKAQGIDREPERHL. A compositionally biased stretch (basic and acidic residues) spans 330-365; sequence QEMERQRERERLAEKQRQQEKERQRLAEQIRQKPDK.

Belongs to the MobA/MobL family.

Functionally, this protein is probably required for relaxation complex formation. This is 43 kDa relaxation protein from Salmonella typhimurium.